Consider the following 189-residue polypeptide: Tetratricopeptide repeat protein 36 (189 aa).

TPR repeat units lie at residues 51 to 84 (SKALELQGVMAAEAGDLSTALERFGQAICLLPER), 86 to 118 (SAYNNRAQARRLQGDVAGALEDLERAVELSGGR), and 123 to 156 (RQSFVQRGLLARLQGRDDDARRDFERAARLGSPF).

The protein belongs to the TTC36 family.

This is Tetratricopeptide repeat protein 36 (TTC36) from Homo sapiens (Human).